Here is a 166-residue protein sequence, read N- to C-terminus: Lipoprotein signal peptidase (166 aa).

4 consecutive transmembrane segments (helical) span residues 9-29 (ASGA…FDQL), 45-65 (ALTS…FGFL), 71-91 (WQRW…CFLL), and 100-120 (FSLS…DRLV). Catalysis depends on residues Asp-126 and Asp-144. The helical transmembrane segment at 135-155 (WHFPAFNLADSAITIGAVLLV) threads the bilayer.

Belongs to the peptidase A8 family.

It localises to the cell inner membrane. The catalysed reaction is Release of signal peptides from bacterial membrane prolipoproteins. Hydrolyzes -Xaa-Yaa-Zaa-|-(S,diacylglyceryl)Cys-, in which Xaa is hydrophobic (preferably Leu), and Yaa (Ala or Ser) and Zaa (Gly or Ala) have small, neutral side chains.. It participates in protein modification; lipoprotein biosynthesis (signal peptide cleavage). In terms of biological role, this protein specifically catalyzes the removal of signal peptides from prolipoproteins. The protein is Lipoprotein signal peptidase of Burkholderia ambifaria (strain ATCC BAA-244 / DSM 16087 / CCUG 44356 / LMG 19182 / AMMD) (Burkholderia cepacia (strain AMMD)).